A 635-amino-acid chain; its full sequence is Leucine-rich repeat and fibronectin type-III domain-containing protein 4 (635 aa).

Positions 1-16 are cleaved as a signal peptide; sequence MAPPLLLLLLASGAAA. The region spanning 17-48 is the LRRNT domain; it reads CPLPCVCQNLSESLSTLCAHRGLLFVPPNVDR. Residues 17–518 lie on the Extracellular side of the membrane; the sequence is CPLPCVCQNL…LQAHVLGGTL (502 aa). Residues Asn25 and Asn70 are each glycosylated (N-linked (GlcNAc...) asparagine). LRR repeat units lie at residues 49–70, 73–94, 97–118, 121–142, 146–161, 170–191, and 194–215; these read RTVE…DFRN, GLVD…AFGD, SLRS…SLRG, NLQH…AFDD, SLED…RQVP, ALHT…AFAQ, and QLSR…PLFS. An LRRCT domain is found at 234–280; that stretch reads NPLHCNCELLWLRRLARPDDLETCASPPGLAGRYFWAVPEGEFSCEP. Positions 281–367 constitute an Ig-like domain; the sequence is PLIARHTQRL…GEATARVELR (87 aa). A disulfide bridge links Cys302 with Cys351. N-linked (GlcNAc...) asparagine glycosylation is found at Asn324, Asn333, Asn376, and Asn440. The segment at 373–410 is disordered; the sequence is HGGNSSAEGGRPGPSDIAASARTAAEGEGTLESEPAVQ. In terms of domain architecture, Fibronectin type-III spans 405 to 502; the sequence is SEPAVQVTEV…GCAHFSTLPA (98 aa). The chain crosses the membrane as a helical span at residues 519-539; the sequence is TVAVGGVLVAALLVFTVALLV. The Cytoplasmic portion of the chain corresponds to 540-635; the sequence is RGRGAGNGRL…SAERLEESVV (96 aa). The interval 555 to 583 is disordered; that stretch reads HVQSQTNGGPSPTPKAHPPRSPPPRPQRS. The segment covering 565-580 has biased composition (pro residues); sequence SPTPKAHPPRSPPPRP. A phosphoserine mark is found at Ser585 and Ser626. A PDZ-binding motif is present at residues 632 to 635; sequence ESVV.

Belongs to the LRFN family. In terms of assembly, can form heteromeric complexes with LRFN1, LRFN2, LRFN3 and LRFN5. Unable to form homophilic interactions across cell junctions. Interacts with DLG1, DLG2, DLG3 and DLG4. Post-translationally, glycosylated.

The protein resides in the membrane. Its function is as follows. Promotes neurite outgrowth in hippocampal neurons. May play a role in redistributing DLG4 to the cell periphery. This chain is Leucine-rich repeat and fibronectin type-III domain-containing protein 4 (LRFN4), found in Homo sapiens (Human).